A 198-amino-acid polypeptide reads, in one-letter code: Large ribosomal subunit protein bL25 (198 aa).

This sequence belongs to the bacterial ribosomal protein bL25 family. CTC subfamily. Part of the 50S ribosomal subunit; part of the 5S rRNA/L5/L18/L25 subcomplex. Contacts the 5S rRNA. Binds to the 5S rRNA independently of L5 and L18.

Its function is as follows. This is one of the proteins that binds to the 5S RNA in the ribosome where it forms part of the central protuberance. The protein is Large ribosomal subunit protein bL25 of Gloeothece citriformis (strain PCC 7424) (Cyanothece sp. (strain PCC 7424)).